A 785-amino-acid polypeptide reads, in one-letter code: Mitochondrial intermediate peptidase (785 aa).

The N-terminal 43 residues, 1–43 (MLTRPAQNALLKSMQPLFRFRGCLLAKSTSTPRRDISTSSRKL), are a transit peptide targeting the mitochondrion. Histidine 567 serves as a coordination point for Zn(2+). The active site involves glutamate 568. 2 residues coordinate Zn(2+): histidine 571 and histidine 574.

This sequence belongs to the peptidase M3 family. Zn(2+) serves as cofactor.

It is found in the mitochondrion matrix. The catalysed reaction is Release of an N-terminal octapeptide as second stage of processing of some proteins imported into the mitochondrion.. Functionally, cleaves proteins, imported into the mitochondrion, to their mature size. While most mitochondrial precursor proteins are processed to the mature form in one step by mitochondrial processing peptidase (MPP), the sequential cleavage by MIP of an octapeptide after initial processing by MPP is a required step for a subgroup of nuclear-encoded precursor proteins destined for the matrix or the inner membrane. This chain is Mitochondrial intermediate peptidase (OCT1), found in Pleurotus djamor (Pink oyster mushroom).